The chain runs to 341 residues: uncharacterized protein (341 aa).

3 helical membrane-spanning segments follow: residues Ile6–Trp26, Leu63–Ile83, and Ala137–Val157.

The protein resides in the cell membrane. This is an uncharacterized protein from Bacillus subtilis (strain 168).